Here is a 243-residue protein sequence, read N- to C-terminus: Ribonuclease PH (243 aa).

Residues arginine 84 and 122 to 124 (GTR) each bind phosphate.

Belongs to the RNase PH family. In terms of assembly, homohexameric ring arranged as a trimer of dimers.

It catalyses the reaction tRNA(n+1) + phosphate = tRNA(n) + a ribonucleoside 5'-diphosphate. Phosphorolytic 3'-5' exoribonuclease that plays an important role in tRNA 3'-end maturation. Removes nucleotide residues following the 3'-CCA terminus of tRNAs; can also add nucleotides to the ends of RNA molecules by using nucleoside diphosphates as substrates, but this may not be physiologically important. Probably plays a role in initiation of 16S rRNA degradation (leading to ribosome degradation) during starvation. The sequence is that of Ribonuclease PH from Bdellovibrio bacteriovorus (strain ATCC 15356 / DSM 50701 / NCIMB 9529 / HD100).